The following is a 953-amino-acid chain: TPR repeat-containing protein ZIP4 (953 aa).

One copy of the TPR 1 repeat lies at 129–162 (ASFFHRSGLAWLDLGRVDLASACFEKATPLVSAA). Positions 248-269 (AASPSSSSPRTPPYGGATPKTP) are disordered. TPR repeat units follow at residues 432–465 (HALLWNCGTEHFRAKNYDTSADLIERSMLYVSRD) and 473–506 (ADCFRVLSICHIALQHLDRALEFVNEAYKVEPNI). The interval 924 to 953 (RVSGDEPDECSQEEAPKASISGSMSQPVLV) is disordered. Residues 943 to 953 (ISGSMSQPVLV) show a composition bias toward polar residues.

Its subcellular location is the nucleus. It is found in the chromosome. Functionally, required for crossover formation, complete synapsis of homologous chromosomes and bivalent formation during meiosis. Is specific to recombination events resulting in interference-sensitive crossovers (class I meiotic crossover) and works cooperatively with MER3 to promote crossovers. The sequence is that of TPR repeat-containing protein ZIP4 from Oryza sativa subsp. indica (Rice).